Reading from the N-terminus, the 122-residue chain is Large ribosomal subunit protein uL14 (122 aa).

It belongs to the universal ribosomal protein uL14 family. As to quaternary structure, part of the 50S ribosomal subunit. Forms a cluster with proteins L3 and L19. In the 70S ribosome, L14 and L19 interact and together make contacts with the 16S rRNA in bridges B5 and B8.

Its function is as follows. Binds to 23S rRNA. Forms part of two intersubunit bridges in the 70S ribosome. This chain is Large ribosomal subunit protein uL14, found in Rippkaea orientalis (strain PCC 8801 / RF-1) (Cyanothece sp. (strain PCC 8801)).